Here is a 379-residue protein sequence, read N- to C-terminus: Mannan endo-1,4-beta-mannosidase 7 (379 aa).

Residues Trp64 and Asn179 each coordinate substrate. Glu180 (proton donor) is an active-site residue. Tyr260 is a substrate binding site. Glu300 functions as the Nucleophile in the catalytic mechanism. Trp342 lines the substrate pocket.

It belongs to the glycosyl hydrolase 5 (cellulase A) family. As to expression, expression not detected.

It catalyses the reaction Random hydrolysis of (1-&gt;4)-beta-D-mannosidic linkages in mannans, galactomannans and glucomannans.. In Oryza sativa subsp. japonica (Rice), this protein is Mannan endo-1,4-beta-mannosidase 7 (MAN7).